Here is a 276-residue protein sequence, read N- to C-terminus: Putative pyruvate, phosphate dikinase regulatory protein 2 (276 aa).

An ADP-binding site is contributed by 146-153 (GVSRTSKT).

The protein belongs to the pyruvate, phosphate/water dikinase regulatory protein family. PDRP subfamily.

It catalyses the reaction N(tele)-phospho-L-histidyl/L-threonyl-[pyruvate, phosphate dikinase] + ADP = N(tele)-phospho-L-histidyl/O-phospho-L-threonyl-[pyruvate, phosphate dikinase] + AMP + H(+). It carries out the reaction N(tele)-phospho-L-histidyl/O-phospho-L-threonyl-[pyruvate, phosphate dikinase] + phosphate + H(+) = N(tele)-phospho-L-histidyl/L-threonyl-[pyruvate, phosphate dikinase] + diphosphate. Functionally, bifunctional serine/threonine kinase and phosphorylase involved in the regulation of the pyruvate, phosphate dikinase (PPDK) by catalyzing its phosphorylation/dephosphorylation. The chain is Putative pyruvate, phosphate dikinase regulatory protein 2 from Enterococcus faecalis (strain ATCC 700802 / V583).